Here is a 525-residue protein sequence, read N- to C-terminus: Keratin, type I cytoskeletal 24 (525 aa).

Residues 1–30 (MSCSSRASSSRAGGSSSARVSAGGSSFSSG) are disordered. The segment at 1-139 (MSCSSRASSS…VGDGGLFSGG (139 aa)) is head. The interval 140–175 (EKQTMQNLNDRLANYLDKVRALEEANTDLENKIKEW) is coil 1A. The region spanning 140-456 (EKQTMQNLND…RLLDGEGGGS (317 aa)) is the IF rod domain. Residues 176 to 198 (YDKYGPGSGDGGSGRDYSKYYSI) are linker 1. The segment at 199 to 290 (IEDLRNQIIA…KNHEEEMKNM (92 aa)) is coil 1B. Positions 291 to 313 (QGSSGGEVTVEMNAAPGTDLTKL) are linker 12. Residues 314-452 (LNDMRAQYEE…ETYRRLLDGE (139 aa)) form a coil 2 region. A tail region spans residues 453–525 (GGGSSFAEFG…VSSISEVKVK (73 aa)). The tract at residues 459-497 (AEFGGRNSGSVNMGSRDLVSGDSRSGSCSGQGRDSSKTR) is disordered. Residues 480-491 (DSRSGSCSGQGR) are compositionally biased toward polar residues.

It belongs to the intermediate filament family. As to quaternary structure, heterotetramer of two type I and two type II keratins. Highly expressed in keratinocytes, placenta, colon and spleen. Expressed at lower level in thymus and testis.

This Homo sapiens (Human) protein is Keratin, type I cytoskeletal 24 (KRT24).